The chain runs to 196 residues: Ribonuclease HII (196 aa).

The 188-residue stretch at 9-196 (GLVCGIDEAG…GPVARQLSLL (188 aa)) folds into the RNase H type-2 domain. A divalent metal cation is bound by residues Asp-15, Glu-16, and Asp-107.

This sequence belongs to the RNase HII family. It depends on Mn(2+) as a cofactor. Mg(2+) serves as cofactor.

It is found in the cytoplasm. The enzyme catalyses Endonucleolytic cleavage to 5'-phosphomonoester.. In terms of biological role, endonuclease that specifically degrades the RNA of RNA-DNA hybrids. This is Ribonuclease HII from Dechloromonas aromatica (strain RCB).